A 397-amino-acid chain; its full sequence is Major outer membrane porin, serovar C (397 aa).

The N-terminal stretch at 1 to 22 is a signal peptide; sequence MKKLLKSVLVFAALSSASSLQA.

The protein belongs to the chlamydial porin (CP) (TC 1.B.2) family. In terms of assembly, part of a disulfide cross-linked outer membrane complex (COMC) composed of the major outer membrane porin (MOMP), the small cysteine-rich protein (OmcA) and the large cysteine-rich periplasmic protein (OmcB).

It localises to the cell outer membrane. In terms of biological role, in elementary bodies (EBs, the infectious stage, which is able to survive outside the host cell) provides the structural integrity of the outer envelope through disulfide cross-links with the small cysteine-rich protein and the large cysteine-rich periplasmic protein. It has been described in publications as the Sarkosyl-insoluble COMC (Chlamydia outer membrane complex), and serves as the functional equivalent of peptidoglycan. Its function is as follows. Permits diffusion of specific solutes through the outer membrane. The chain is Major outer membrane porin, serovar C (ompA) from Chlamydia trachomatis.